The chain runs to 105 residues: Thioredoxin (105 aa).

In terms of domain architecture, Thioredoxin spans 1-105 (MVNNVTDISF…SLLDWINKSI (105 aa)). Cys-30 and Cys-33 are joined by a disulfide.

Belongs to the thioredoxin family.

In terms of biological role, component of the thioredoxin-thioredoxin reductase system. Participates in various redox reactions through the reversible oxidation of its active center dithiol to a disulfide and catalyzes dithiol-disulfide exchange reactions. The chain is Thioredoxin (trxA) from Rickettsia typhi (strain ATCC VR-144 / Wilmington).